We begin with the raw amino-acid sequence, 446 residues long: MLAIAILAAGKGTRMKSKLPKVLHPLAGKSLIDRVLSCTHGLKPNRRLIVVGHQANLVEDSLRKHQDLDFVLQQPQNGTGHAIQQLKPRLKGFNGELLVLNGDVPLLKEETLSSLLKFHKESNASVTFLSASLDSPTGYGRVFTDESGLVKKIIEERDCTNEQRKNKLINAGIYCFNWQQLSDVLNLLSNQNSQNEIYLTDTISLLKKALHFEVDNPFEIKGINDRVQLSECEHYIQEELKSLWMSKGVSFVDPISCSLSEDSNFGTDVIIEPQTHLRGKCSIGNGCHLGPGSVITNSTLAENVLAIHSFINEATIGNNTSIGPFAHIRPESNIRQNSKIGNFVEIKKSCIGEGTKINHLSYVGDSALGKNINIGAGTITANFDGKNKHRTIIDDYSKTGANSVLVAPIKIGAHVTIGAGSTISKDIPDKSLVVERSKAIIRTKAD.

A pyrophosphorylase region spans residues 1-226 (MLAIAILAAG…PFEIKGINDR (226 aa)). Residues 7–10 (LAAG), lysine 21, glutamine 73, and 78–79 (GT) contribute to the UDP-N-acetyl-alpha-D-glucosamine site. Aspartate 103 contributes to the Mg(2+) binding site. Positions 140, 155, 170, and 224 each coordinate UDP-N-acetyl-alpha-D-glucosamine. Position 224 (asparagine 224) interacts with Mg(2+). The interval 227 to 247 (VQLSECEHYIQEELKSLWMSK) is linker. The N-acetyltransferase stretch occupies residues 248 to 446 (GVSFVDPISC…SKAIIRTKAD (199 aa)). Positions 329 and 347 each coordinate UDP-N-acetyl-alpha-D-glucosamine. The active-site Proton acceptor is the histidine 359. 2 residues coordinate UDP-N-acetyl-alpha-D-glucosamine: tyrosine 362 and asparagine 373. Alanine 376, alanine 419, and arginine 436 together coordinate acetyl-CoA.

In the N-terminal section; belongs to the N-acetylglucosamine-1-phosphate uridyltransferase family. The protein in the C-terminal section; belongs to the transferase hexapeptide repeat family. In terms of assembly, homotrimer. Mg(2+) serves as cofactor.

Its subcellular location is the cytoplasm. The enzyme catalyses alpha-D-glucosamine 1-phosphate + acetyl-CoA = N-acetyl-alpha-D-glucosamine 1-phosphate + CoA + H(+). The catalysed reaction is N-acetyl-alpha-D-glucosamine 1-phosphate + UTP + H(+) = UDP-N-acetyl-alpha-D-glucosamine + diphosphate. Its pathway is nucleotide-sugar biosynthesis; UDP-N-acetyl-alpha-D-glucosamine biosynthesis; N-acetyl-alpha-D-glucosamine 1-phosphate from alpha-D-glucosamine 6-phosphate (route II): step 2/2. It participates in nucleotide-sugar biosynthesis; UDP-N-acetyl-alpha-D-glucosamine biosynthesis; UDP-N-acetyl-alpha-D-glucosamine from N-acetyl-alpha-D-glucosamine 1-phosphate: step 1/1. It functions in the pathway bacterial outer membrane biogenesis; LPS lipid A biosynthesis. Catalyzes the last two sequential reactions in the de novo biosynthetic pathway for UDP-N-acetylglucosamine (UDP-GlcNAc). The C-terminal domain catalyzes the transfer of acetyl group from acetyl coenzyme A to glucosamine-1-phosphate (GlcN-1-P) to produce N-acetylglucosamine-1-phosphate (GlcNAc-1-P), which is converted into UDP-GlcNAc by the transfer of uridine 5-monophosphate (from uridine 5-triphosphate), a reaction catalyzed by the N-terminal domain. The chain is Bifunctional protein GlmU from Prochlorococcus marinus (strain NATL2A).